A 217-amino-acid polypeptide reads, in one-letter code: Protein-L-isoaspartate O-methyltransferase (217 aa).

S64 is an active-site residue.

It belongs to the methyltransferase superfamily. L-isoaspartyl/D-aspartyl protein methyltransferase family.

It is found in the cytoplasm. The catalysed reaction is [protein]-L-isoaspartate + S-adenosyl-L-methionine = [protein]-L-isoaspartate alpha-methyl ester + S-adenosyl-L-homocysteine. Catalyzes the methyl esterification of L-isoaspartyl residues in peptides and proteins that result from spontaneous decomposition of normal L-aspartyl and L-asparaginyl residues. It plays a role in the repair and/or degradation of damaged proteins. This chain is Protein-L-isoaspartate O-methyltransferase, found in Rhodopseudomonas palustris (strain BisB5).